Consider the following 1342-residue polypeptide: MAYSYSEKKRIRKSFGKRPQVLNVPYLLTIQLDSYEKFIQRDSDGQQGLEAAFRSVFPIVSNNGSTELQYVSYELGEPVFDVRECQIRGTTYAAPLRVKLRLVTFDREAAAGTVKDIKEQNVYMGEIPLMTDNGTFVINGTERVIVSQLHRSPGVFFDSDKGKTHSSGKVLYNARIIPYRGSWLDFEFDPKDNLYARIDRRRKLPATIILRALGYTTEEILSMFFDKVNFEIQDNKLLMTLVPERLRGETAAFDIEANGKVYVERGRRITARHIRTLEKDEIKQIEVPVEYIVGKVAAKDYVDLSTGELVCPANMEISMEMLAKLSQAGYKEIEVLFTNDLDHGPYISETLRVDPTYDRLSALVEIYRMMRPGEPPTKEAAEALFDNMFFSADRYDLSAVGRMKFNRSLNLEEGVGSGILSNDDITGVMKKLIEIRNGRGEVDDIDHLGNRRIRSVGEMAENQFRIGLVRVERAVRERLSLGDLDGITPQDLINAKPISAAVKEFFGSSQLSQFMDQNNPLSEVTHKRRISALGPGGLTRERAGFEVRDVHTTHYGRLCPIETPEGPNIGLINSLSVYARTNNYGFLETPFRKVVNGQVTEDIEYLSAIEEGNYVIAQANSNLDENFRFTDTYVTCRGEHGESGLYKPEDIHYMDISTQQVVSVAAALIPFLEHDDANRALMGANMQRQAVPTLRADKPLVGTGMEKPIALDSGVAIVAKRGGIVQRVDASRIVVKVNEDETIPGEAGIDIYNLIKYTRSNQNTCINQIPCVNLGEPVARGEILADGPSTDLGELALGQNIRVAFMPWNGYNFEDSMLVSERVVQEDRFTTIHIQELSCVARDTKLGAEEITADIPNVGESALSKLDESGIVYVGAEVKGGDILVGKVTPKGETQLTPEEKLLRAIFGEKASDVKDSSLRVPNGTSGTVIDVQVFTRDGVEKDKRALEIEEMQLKEAKKDLTEELEILEAGLFTRVRNLLIEGGVSEAELDKVAREKWLEQTLDDEAKQNQLEQLAEQHEELRKEFERKLEIKRNKIIQGDDLAPGVLKVVKVYLAVRRQIQPGDKMAGRHGNKGVISKINPVEDMPYDENGQPVEIVLNPLGVPSRMNIGQILETHLGLAAKGIGDQINAMIKQQQSVAKLREYIQKAYDLGHGSQSVDLSTFTDEEVMRLAENLRKGLPLATPVFDGAHESEIKGLLELGDLPTSGQITLFDGRTGEKFERPVTVGYMYMLKLNHLVDDKMHARSTGSYSLVTQQPLGGKAQFGGQRFGEMEVWALEAYGAAYTLQEMLTVKSDDVNGRTKMYKNIVDGTHQMEPGMPESFNVLLKEIRALGIDMELDEE.

The protein belongs to the RNA polymerase beta chain family. In terms of assembly, the RNAP catalytic core consists of 2 alpha, 1 beta, 1 beta' and 1 omega subunit. When a sigma factor is associated with the core the holoenzyme is formed, which can initiate transcription.

The catalysed reaction is RNA(n) + a ribonucleoside 5'-triphosphate = RNA(n+1) + diphosphate. Functionally, DNA-dependent RNA polymerase catalyzes the transcription of DNA into RNA using the four ribonucleoside triphosphates as substrates. The polypeptide is DNA-directed RNA polymerase subunit beta (Actinobacillus pleuropneumoniae serotype 3 (strain JL03)).